A 1067-amino-acid chain; its full sequence is Cadmium/zinc-transporting ATPase HMA2 (1067 aa).

Positions 9–75 (QKSYFDVLGI…ALNQARLEAS (67 aa)) constitute an HMA domain. The next 8 membrane-spanning stretches (helical) occupy residues 94–114 (YVLL…WHPL), 117–137 (FALV…IAAI), 140–160 (LTLD…ALKD), 162–182 (SEAG…TRAS), 313–333 (YTPA…IAKA), 342–362 (LALV…TPIA), 649–669 (IIVN…LAFA), and 673–693 (LIWA…MYSM). Disordered regions lie at residues 711 to 739 (HHGS…HHCS), 760 to 790 (HDHH…SHGH), and 960 to 996 (NDTH…GHHP). Basic residues predominate over residues 724 to 735 (HGSHAKKNHGVS). 2 stretches are compositionally biased toward basic and acidic residues: residues 760-774 (HDHH…EPAH) and 975-996 (SSDH…GHHP).

Belongs to the cation transport ATPase (P-type) (TC 3.A.3) family. Type IB subfamily. As to expression, in roots, localizes at the pericycle cells. In nodes, localizes in the phloem parenchyma and companion cells of both enlarged and diffuse vascular bundles.

It is found in the cell membrane. It catalyses the reaction Zn(2+)(in) + ATP + H2O = Zn(2+)(out) + ADP + phosphate + H(+). The enzyme catalyses Cd(2+)(in) + ATP + H2O = Cd(2+)(out) + ADP + phosphate + H(+). In terms of biological role, zinc/cadmium transporter that plays an essential role in promoting translocation of zinc and cadmium from roots to shoots. May control cadmium loading into xylem. In roots, transports zinc and cadmium from the apoplast to the symplast to facilitate translocation via the phloem. In nodes, functions to load zinc and cadmium to the phloem for the preferential distribution to the upper nodes and panicles. The chain is Cadmium/zinc-transporting ATPase HMA2 from Oryza sativa subsp. japonica (Rice).